A 926-amino-acid polypeptide reads, in one-letter code: Alpha-aminoadipic semialdehyde synthase, mitochondrial (926 aa).

Residues 1–27 (MLRVSRTKLGRLSPSLSRGLHHKAVMA) constitute a mitochondrion transit peptide. A lysine-ketoglutarate reductase region spans residues 28–455 (LRREDVNAWE…DAVIASNGML (428 aa)). Residues Lys-48 and Lys-56 each carry the N6-acetyllysine modification. Lys-93 bears the N6-acetyllysine; alternate mark. Position 93 is an N6-succinyllysine; alternate (Lys-93). Lys-128 bears the N6-acetyllysine mark. An N6-acetyllysine; alternate modification is found at Lys-138. Lys-138 bears the N6-succinyllysine; alternate mark. Lys-274 is modified (N6-succinyllysine). An N6-acetyllysine; alternate modification is found at Lys-286. Residue Lys-286 is modified to N6-succinyllysine; alternate. The residue at position 333 (Lys-333) is an N6-succinyllysine. Lys-458 bears the N6-acetyllysine; alternate mark. Position 458 is an N6-succinyllysine; alternate (Lys-458). The segment at 477–926 (MGTKKKVLVL…MYTTQSTIKL (450 aa)) is saccharopine dehydrogenase. The NAD(+) site is built by Ser-488, Asp-512, and Gln-516. An N6-acetyllysine; alternate mark is found at Lys-523 and Lys-535. 2 positions are modified to N6-succinyllysine; alternate: Lys-523 and Lys-535. NAD(+)-binding residues include Leu-554, Ala-576, and Ser-577. 577–578 (SY) is a binding site for L-saccharopine. Lys-584 bears the N6-acetyllysine; alternate mark. An N6-succinyllysine; alternate modification is found at Lys-584. 3 residues coordinate NAD(+): Leu-603, Asp-604, and Pro-605. Asp-604 lines the L-saccharopine pocket. L-saccharopine is bound at residue Arg-703. Position 707 is an N6-acetyllysine (Lys-707). Position 724–726 (724–726 (TLR)) interacts with L-saccharopine. Residue Lys-732 is modified to N6-succinyllysine. Lys-739 is modified (N6-acetyllysine). Residue Lys-761 is modified to N6-acetyllysine; alternate. Lys-761 carries the N6-succinyllysine; alternate modification. Position 780 is an N6-acetyllysine (Lys-780).

The protein in the N-terminal section; belongs to the AlaDH/PNT family. This sequence in the C-terminal section; belongs to the saccharopine dehydrogenase family. In terms of assembly, homotetramer.

The protein localises to the mitochondrion. The enzyme catalyses L-saccharopine + NADP(+) + H2O = L-lysine + 2-oxoglutarate + NADPH + H(+). It carries out the reaction L-saccharopine + NAD(+) + H2O = (S)-2-amino-6-oxohexanoate + L-glutamate + NADH + H(+). Its pathway is amino-acid degradation; L-lysine degradation via saccharopine pathway; glutaryl-CoA from L-lysine: step 1/6. The protein operates within amino-acid degradation; L-lysine degradation via saccharopine pathway; glutaryl-CoA from L-lysine: step 2/6. Bifunctional enzyme that catalyzes the first two steps in lysine degradation. This Bos taurus (Bovine) protein is Alpha-aminoadipic semialdehyde synthase, mitochondrial.